Reading from the N-terminus, the 388-residue chain is Nuclear hormone receptor family member nhr-16 (388 aa).

The segment at residues 11–86 (FLKCAICQES…VGMNPAGVQQ (76 aa)) is a DNA-binding region (nuclear receptor). NR C4-type zinc fingers lie at residues 14 to 34 (CAIC…CRAC) and 50 to 74 (CQGN…YIKC). Residues 115 to 387 (PPSSLMLHIP…DEFYNLMSGR (273 aa)) form the NR LBD domain.

The protein belongs to the nuclear hormone receptor family.

It localises to the nucleus. In terms of biological role, orphan nuclear receptor. This is Nuclear hormone receptor family member nhr-16 (nhr-16) from Caenorhabditis elegans.